A 29-amino-acid polypeptide reads, in one-letter code: Chassatide C10 (29 aa).

Residues 1 to 29 (GEYCGESCYLIPCFTPGCYCVSRQCVNKN) constitute a cross-link (cyclopeptide (Gly-Asn)). 3 disulfide bridges follow: C4-C18, C8-C20, and C13-C25.

Post-translationally, this is a cyclic peptide.

Functionally, probably participates in a plant defense mechanism. Has no activity against bacteria up to a concentration of 80 uM. Has cytotoxic but no hemolytic activity. The protein is Chassatide C10 of Chassalia chartacea (Chassalia curviflora).